The following is a 363-amino-acid chain: 3-dehydroquinate synthase (363 aa).

NAD(+) is bound by residues 103–107 (GAVGD), 127–128 (TT), K139, K148, and 166–169 (FSET). Zn(2+) contacts are provided by E181, H243, and H260.

It belongs to the sugar phosphate cyclases superfamily. Dehydroquinate synthase family. Requires Co(2+) as cofactor. Zn(2+) serves as cofactor. It depends on NAD(+) as a cofactor.

The protein localises to the cytoplasm. It catalyses the reaction 7-phospho-2-dehydro-3-deoxy-D-arabino-heptonate = 3-dehydroquinate + phosphate. Its pathway is metabolic intermediate biosynthesis; chorismate biosynthesis; chorismate from D-erythrose 4-phosphate and phosphoenolpyruvate: step 2/7. In terms of biological role, catalyzes the conversion of 3-deoxy-D-arabino-heptulosonate 7-phosphate (DAHP) to dehydroquinate (DHQ). In Lysinibacillus sphaericus (strain C3-41), this protein is 3-dehydroquinate synthase.